We begin with the raw amino-acid sequence, 341 residues long: RNA 3'-terminal phosphate cyclase (341 aa).

ATP-binding positions include Gln-102 and 283 to 287 (HLADQ). Residue His-308 is the Tele-AMP-histidine intermediate of the active site.

Belongs to the RNA 3'-terminal cyclase family. Type 1 subfamily.

The protein resides in the cytoplasm. It carries out the reaction a 3'-end 3'-phospho-ribonucleotide-RNA + ATP = a 3'-end 2',3'-cyclophospho-ribonucleotide-RNA + AMP + diphosphate. Its function is as follows. Catalyzes the conversion of 3'-phosphate to a 2',3'-cyclic phosphodiester at the end of RNA. The mechanism of action of the enzyme occurs in 3 steps: (A) adenylation of the enzyme by ATP; (B) transfer of adenylate to an RNA-N3'P to produce RNA-N3'PP5'A; (C) and attack of the adjacent 2'-hydroxyl on the 3'-phosphorus in the diester linkage to produce the cyclic end product. The biological role of this enzyme is unknown but it is likely to function in some aspects of cellular RNA processing. This Pseudomonas aeruginosa (strain LESB58) protein is RNA 3'-terminal phosphate cyclase.